Here is a 314-residue protein sequence, read N- to C-terminus: 4-hydroxy-3-methylbut-2-enyl diphosphate reductase (314 aa).

Cys12 is a [4Fe-4S] cluster binding site. Positions 41 and 74 each coordinate (2E)-4-hydroxy-3-methylbut-2-enyl diphosphate. Positions 41 and 74 each coordinate dimethylallyl diphosphate. Isopentenyl diphosphate-binding residues include His41 and His74. Cys96 lines the [4Fe-4S] cluster pocket. His124 lines the (2E)-4-hydroxy-3-methylbut-2-enyl diphosphate pocket. His124 serves as a coordination point for dimethylallyl diphosphate. Position 124 (His124) interacts with isopentenyl diphosphate. Glu126 serves as the catalytic Proton donor. Residue Thr167 coordinates (2E)-4-hydroxy-3-methylbut-2-enyl diphosphate. Cys197 serves as a coordination point for [4Fe-4S] cluster. Residues Ser225, Ser226, Asn227, and Ser269 each contribute to the (2E)-4-hydroxy-3-methylbut-2-enyl diphosphate site. Dimethylallyl diphosphate-binding residues include Ser225, Ser226, Asn227, and Ser269. Positions 225, 226, 227, and 269 each coordinate isopentenyl diphosphate.

Belongs to the IspH family. It depends on [4Fe-4S] cluster as a cofactor.

The enzyme catalyses isopentenyl diphosphate + 2 oxidized [2Fe-2S]-[ferredoxin] + H2O = (2E)-4-hydroxy-3-methylbut-2-enyl diphosphate + 2 reduced [2Fe-2S]-[ferredoxin] + 2 H(+). The catalysed reaction is dimethylallyl diphosphate + 2 oxidized [2Fe-2S]-[ferredoxin] + H2O = (2E)-4-hydroxy-3-methylbut-2-enyl diphosphate + 2 reduced [2Fe-2S]-[ferredoxin] + 2 H(+). Its pathway is isoprenoid biosynthesis; dimethylallyl diphosphate biosynthesis; dimethylallyl diphosphate from (2E)-4-hydroxy-3-methylbutenyl diphosphate: step 1/1. It participates in isoprenoid biosynthesis; isopentenyl diphosphate biosynthesis via DXP pathway; isopentenyl diphosphate from 1-deoxy-D-xylulose 5-phosphate: step 6/6. Catalyzes the conversion of 1-hydroxy-2-methyl-2-(E)-butenyl 4-diphosphate (HMBPP) into a mixture of isopentenyl diphosphate (IPP) and dimethylallyl diphosphate (DMAPP). Acts in the terminal step of the DOXP/MEP pathway for isoprenoid precursor biosynthesis. The chain is 4-hydroxy-3-methylbut-2-enyl diphosphate reductase from Histophilus somni (strain 2336) (Haemophilus somnus).